The following is a 340-amino-acid chain: Phosphate acyltransferase (340 aa).

It belongs to the PlsX family. In terms of assembly, homodimer. Probably interacts with PlsY.

It localises to the cytoplasm. It carries out the reaction a fatty acyl-[ACP] + phosphate = an acyl phosphate + holo-[ACP]. The protein operates within lipid metabolism; phospholipid metabolism. Functionally, catalyzes the reversible formation of acyl-phosphate (acyl-PO(4)) from acyl-[acyl-carrier-protein] (acyl-ACP). This enzyme utilizes acyl-ACP as fatty acyl donor, but not acyl-CoA. This chain is Phosphate acyltransferase, found in Nitrosococcus oceani (strain ATCC 19707 / BCRC 17464 / JCM 30415 / NCIMB 11848 / C-107).